A 176-amino-acid chain; its full sequence is Large ribosomal subunit protein uL10 (176 aa).

It belongs to the universal ribosomal protein uL10 family. Part of the ribosomal stalk of the 50S ribosomal subunit. The N-terminus interacts with L11 and the large rRNA to form the base of the stalk. The C-terminus forms an elongated spine to which L12 dimers bind in a sequential fashion forming a multimeric L10(L12)X complex.

Its function is as follows. Forms part of the ribosomal stalk, playing a central role in the interaction of the ribosome with GTP-bound translation factors. This is Large ribosomal subunit protein uL10 from Dehalococcoides mccartyi (strain ATCC BAA-2100 / JCM 16839 / KCTC 5957 / BAV1).